The sequence spans 330 residues: tRNA U34 carboxymethyltransferase (330 aa).

Carboxy-S-adenosyl-L-methionine-binding positions include K91, W105, K110, G130, 152–154 (DPS), 181–182 (IE), M196, Y200, and R315.

Belongs to the class I-like SAM-binding methyltransferase superfamily. CmoB family. As to quaternary structure, homotetramer.

The catalysed reaction is carboxy-S-adenosyl-L-methionine + 5-hydroxyuridine(34) in tRNA = 5-carboxymethoxyuridine(34) in tRNA + S-adenosyl-L-homocysteine + H(+). Catalyzes carboxymethyl transfer from carboxy-S-adenosyl-L-methionine (Cx-SAM) to 5-hydroxyuridine (ho5U) to form 5-carboxymethoxyuridine (cmo5U) at position 34 in tRNAs. The sequence is that of tRNA U34 carboxymethyltransferase from Shewanella halifaxensis (strain HAW-EB4).